The primary structure comprises 166 residues: Interferon gamma (166 aa).

Residues 1–23 (MKYTSYILAFQLCIVLGSLGCYC) form the signal peptide. At glutamine 24 the chain carries Pyrrolidone carboxylic acid. 3 N-linked (GlcNAc...) asparagine glycosylation sites follow: asparagine 48, asparagine 86, and asparagine 120.

The protein belongs to the type II (or gamma) interferon family. As to quaternary structure, homodimer. Interacts with IFNGR1 (via extracellular domain); this interaction promotes IFNGR1 dimerization. In terms of tissue distribution, released primarily from activated T lymphocytes.

It is found in the secreted. Type II interferon produced by immune cells such as T-cells and NK cells that plays crucial roles in antimicrobial, antiviral, and antitumor responses by activating effector immune cells and enhancing antigen presentation. Primarily signals through the JAK-STAT pathway after interaction with its receptor IFNGR1 to affect gene regulation. Upon IFNG binding, IFNGR1 intracellular domain opens out to allow association of downstream signaling components JAK2, JAK1 and STAT1, leading to STAT1 activation, nuclear translocation and transcription of IFNG-regulated genes. Many of the induced genes are transcription factors such as IRF1 that are able to further drive regulation of a next wave of transcription. Plays a role in class I antigen presentation pathway by inducing a replacement of catalytic proteasome subunits with immunoproteasome subunits. In turn, increases the quantity, quality, and repertoire of peptides for class I MHC loading. Increases the efficiency of peptide generation also by inducing the expression of activator PA28 that associates with the proteasome and alters its proteolytic cleavage preference. Up-regulates as well MHC II complexes on the cell surface by promoting expression of several key molecules such as cathepsins B/CTSB, H/CTSH, and L/CTSL. Participates in the regulation of hematopoietic stem cells during development and under homeostatic conditions by affecting their development, quiescence, and differentiation. This chain is Interferon gamma (IFNG), found in Saimiri sciureus (Common squirrel monkey).